Consider the following 344-residue polypeptide: Fructose-1,6-bisphosphatase class 1 (344 aa).

Residues E91, D110, L112, and D113 each contribute to the Mg(2+) site. Residues 113 to 116 (DGSS) and N200 each bind substrate. Residue E272 coordinates Mg(2+).

Belongs to the FBPase class 1 family. As to quaternary structure, homotetramer. It depends on Mg(2+) as a cofactor.

Its subcellular location is the cytoplasm. It catalyses the reaction beta-D-fructose 1,6-bisphosphate + H2O = beta-D-fructose 6-phosphate + phosphate. It functions in the pathway carbohydrate biosynthesis; Calvin cycle. The sequence is that of Fructose-1,6-bisphosphatase class 1 from Rhodopseudomonas palustris (strain BisA53).